The following is a 745-amino-acid chain: Kinesin-like protein KIN-14M (745 aa).

Residues methionine 1–proline 31 are disordered. A globular region spans residues methionine 1–threonine 35. Microtubule-binding stretches follow at residues tyrosine 65–glutamine 77 and serine 198–glycine 745. Coiled coils occupy residues phenylalanine 76 to glutamate 223 and lysine 259 to arginine 389. The 338-residue stretch at asparagine 387–cysteine 724 folds into the Kinesin motor domain. Glycine 472–threonine 479 contacts ATP.

This sequence belongs to the TRAFAC class myosin-kinesin ATPase superfamily. Kinesin family. KIN-14 subfamily. As to quaternary structure, bind to microtubules in an ATP-insensitive manner (in vitro). Homodimer and heterodimer with KIN14N/KATC (in vitro).

The protein resides in the cytoplasm. Its subcellular location is the cytoskeleton. This Arabidopsis thaliana (Mouse-ear cress) protein is Kinesin-like protein KIN-14M.